A 464-amino-acid polypeptide reads, in one-letter code: A-type ATP synthase subunit B (464 aa).

Belongs to the ATPase alpha/beta chains family. As to quaternary structure, has multiple subunits with at least A(3), B(3), C, D, E, F, H, I and proteolipid K(x).

The protein localises to the cell membrane. Functionally, component of the A-type ATP synthase that produces ATP from ADP in the presence of a proton gradient across the membrane. The B chain is a regulatory subunit. In Methanococcus aeolicus (strain ATCC BAA-1280 / DSM 17508 / OCM 812 / Nankai-3), this protein is A-type ATP synthase subunit B.